The following is a 329-amino-acid chain: 3-dehydroquinate synthase (329 aa).

This sequence belongs to the archaeal-type DHQ synthase family.

It catalyses the reaction 2-amino-2,3,7-trideoxy-D-lyxo-hept-6-ulosonate + NAD(+) + H2O = 3-dehydroquinate + NH4(+) + NADH + H(+). Functionally, catalyzes the oxidative deamination and cyclization of 2-amino-3,7-dideoxy-D-threo-hept-6-ulosonic acid (ADH) to yield 3-dehydroquinate (DHQ), which is fed into the canonical shikimic pathway of aromatic amino acid biosynthesis. The chain is 3-dehydroquinate synthase from Methanoregula boonei (strain DSM 21154 / JCM 14090 / 6A8).